We begin with the raw amino-acid sequence, 188 residues long: Elongation factor P (188 aa).

Belongs to the elongation factor P family.

The protein localises to the cytoplasm. It participates in protein biosynthesis; polypeptide chain elongation. Functionally, involved in peptide bond synthesis. Stimulates efficient translation and peptide-bond synthesis on native or reconstituted 70S ribosomes in vitro. Probably functions indirectly by altering the affinity of the ribosome for aminoacyl-tRNA, thus increasing their reactivity as acceptors for peptidyl transferase. The polypeptide is Elongation factor P (Rhodopseudomonas palustris (strain BisA53)).